Here is a 450-residue protein sequence, read N- to C-terminus: Phosphoglucosamine mutase (450 aa).

Serine 101 serves as the catalytic Phosphoserine intermediate. Mg(2+)-binding residues include serine 101, aspartate 240, aspartate 242, and aspartate 244. The residue at position 101 (serine 101) is a Phosphoserine.

Belongs to the phosphohexose mutase family. It depends on Mg(2+) as a cofactor. In terms of processing, activated by phosphorylation.

The enzyme catalyses alpha-D-glucosamine 1-phosphate = D-glucosamine 6-phosphate. Catalyzes the conversion of glucosamine-6-phosphate to glucosamine-1-phosphate. This is Phosphoglucosamine mutase from Streptococcus equi subsp. zooepidemicus (strain MGCS10565).